The primary structure comprises 585 residues: A-type ATP synthase subunit A (585 aa).

Positions 192–211 are disordered; that stretch reads MRQEWPVREPRPTVEKKTPR. Positions 196-211 are enriched in basic and acidic residues; it reads WPVREPRPTVEKKTPR. 237–244 provides a ligand contact to ATP; it reads GPFGSGKT.

Belongs to the ATPase alpha/beta chains family. Has multiple subunits with at least A(3), B(3), C, D, E, F, H, I and proteolipid K(x).

The protein resides in the cell membrane. It catalyses the reaction ATP + H2O + 4 H(+)(in) = ADP + phosphate + 5 H(+)(out). In terms of biological role, component of the A-type ATP synthase that produces ATP from ADP in the presence of a proton gradient across the membrane. The A chain is the catalytic subunit. This Haloquadratum walsbyi (strain DSM 16790 / HBSQ001) protein is A-type ATP synthase subunit A.